The chain runs to 435 residues: uncharacterized protein (435 aa).

11 helical membrane-spanning segments follow: residues 9–29, 57–77, 110–130, 146–166, 176–196, 226–246, 280–300, 321–341, 343–363, 367–387, and 408–428; these read IIVL…ITFA, VGLD…GNIM, TLFG…GGIM, AINV…VLIV, VAAL…ALMT, LPSL…VFTP, VVTS…SWAM, WVIL…MDIT, AILI…IDPV, IIMV…TILF, and FLAL…SLLL.

The protein belongs to the YiaN/YgiK family.

The protein resides in the cell inner membrane. This is an uncharacterized protein from Salmonella typhimurium (strain LT2 / SGSC1412 / ATCC 700720).